Reading from the N-terminus, the 351-residue chain is Nicotinate-nucleotide--dimethylbenzimidazole phosphoribosyltransferase (351 aa).

The active-site Proton acceptor is Glu-317.

Belongs to the CobT family.

It carries out the reaction 5,6-dimethylbenzimidazole + nicotinate beta-D-ribonucleotide = alpha-ribazole 5'-phosphate + nicotinate + H(+). It participates in nucleoside biosynthesis; alpha-ribazole biosynthesis; alpha-ribazole from 5,6-dimethylbenzimidazole: step 1/2. In terms of biological role, catalyzes the synthesis of alpha-ribazole-5'-phosphate from nicotinate mononucleotide (NAMN) and 5,6-dimethylbenzimidazole (DMB). This chain is Nicotinate-nucleotide--dimethylbenzimidazole phosphoribosyltransferase, found in Pseudomonas aeruginosa (strain UCBPP-PA14).